We begin with the raw amino-acid sequence, 38 residues long: ILSLSLLDRSTRCKGTGKSCSRIAYNCCTGSCRSGKCG.

The propeptide occupies 1-12; it reads ILSLSLLDRSTR. Disulfide bonds link Cys13–Cys28, Cys20–Cys32, and Cys27–Cys37. Cysteine amide is present on Cys37.

Belongs to the conotoxin O1 superfamily. As to expression, expressed by the venom duct.

It is found in the secreted. In terms of biological role, omega-conotoxins act at presynaptic membranes, they bind and block voltage-gated calcium channels (Cav). This peptide reversibly and selectively inhibits Cav2.2/CACNA1B (IC(50)=11.5 nM) voltage-gated calcium channels. Channel time recovery after toxin exposure is short (about 50 seconds). In vivo, it effectively and dose-dependently reduces nociceptive behavior in the formalin test and in neuropathic pain models, and reduces mechanical and thermal allodynia in the tail nerve injury rat model. It also shows significant analgesic effects on writhing in mouse neurotransmitter- and cytokine-induced pain models, though it has no effect on acute thermal pain and interferon-gamma-induced pain. It also depresses blood pressure immediately after administration, but pressure recovers relatively quickly and completely. The sequence is that of Conotoxin FVIA from Conus fulmen (Thunderbolt cone).